Here is a 250-residue protein sequence, read N- to C-terminus: UPF0524 protein C3orf70 (250 aa).

The interval 201–250 (ESCDEDTEEGAELSSEEDYSPESSWEPDECTLLSPSQSDLEVIETIETTV) is disordered. Acidic residues predominate over residues 202–229 (SCDEDTEEGAELSSEEDYSPESSWEPDE).

Belongs to the UPF0524 family.

Its function is as follows. May play a role in neuronal and neurobehavioral development. In Homo sapiens (Human), this protein is UPF0524 protein C3orf70 (C3orf70).